The following is a 269-amino-acid chain: Protein IAL1 (269 aa).

Positions 32 to 133 (SPCAACKFLR…QDLARAKYEL (102 aa)) constitute an LOB domain.

It belongs to the LOB domain-containing protein family. As to expression, expressed in leaves, leaf primordia, immature ears, immature tassels, whole ovules, silk and husk leaves.

The protein localises to the nucleus. The chain is Protein IAL1 from Zea mays (Maize).